We begin with the raw amino-acid sequence, 139 residues long: NADH-quinone oxidoreductase subunit A (139 aa).

Transmembrane regions (helical) follow at residues 16 to 36, 69 to 89, and 94 to 114; these read GLFIIAVFALCALMIGAASLL, LVAMLFVIFDIEAVFLFAWAV, and VGWEGFAGAAVFIFILLAGLV.

This sequence belongs to the complex I subunit 3 family. As to quaternary structure, NDH-1 is composed of 14 different subunits. Subunits NuoA, H, J, K, L, M, N constitute the membrane sector of the complex.

Its subcellular location is the cell inner membrane. It catalyses the reaction a quinone + NADH + 5 H(+)(in) = a quinol + NAD(+) + 4 H(+)(out). NDH-1 shuttles electrons from NADH, via FMN and iron-sulfur (Fe-S) centers, to quinones in the respiratory chain. The immediate electron acceptor for the enzyme in this species is believed to be ubiquinone. Couples the redox reaction to proton translocation (for every two electrons transferred, four hydrogen ions are translocated across the cytoplasmic membrane), and thus conserves the redox energy in a proton gradient. This chain is NADH-quinone oxidoreductase subunit A, found in Chromohalobacter salexigens (strain ATCC BAA-138 / DSM 3043 / CIP 106854 / NCIMB 13768 / 1H11).